The following is a 338-amino-acid chain: 3-isopropylmalate dehydrogenase (338 aa).

Substrate is bound by residues R88, R98, R122, and D212. The Mg(2+) site is built by D212, D236, and D240. G272–D284 is an NAD(+) binding site.

The protein belongs to the isocitrate and isopropylmalate dehydrogenases family. LeuB type 2 subfamily. In terms of assembly, homodimer. Requires Mg(2+) as cofactor. It depends on Mn(2+) as a cofactor.

It is found in the cytoplasm. The catalysed reaction is (2R,3S)-3-isopropylmalate + NAD(+) = 4-methyl-2-oxopentanoate + CO2 + NADH. It functions in the pathway amino-acid biosynthesis; L-leucine biosynthesis; L-leucine from 3-methyl-2-oxobutanoate: step 3/4. Catalyzes the oxidation of 3-carboxy-2-hydroxy-4-methylpentanoate (3-isopropylmalate) to 3-carboxy-4-methyl-2-oxopentanoate. The product decarboxylates to 4-methyl-2 oxopentanoate. The polypeptide is 3-isopropylmalate dehydrogenase (Corynebacterium jeikeium (strain K411)).